A 602-amino-acid chain; its full sequence is Alpha-(1-&gt;6)-mannopyranosyltransferase B (602 aa).

A run of 13 helical transmembrane segments spans residues 105-125 (IGTM…ALPV), 148-168 (MIVL…APLV), 190-210 (TFGA…QDIY), 244-264 (VPFI…SIAA), 274-294 (IVGG…AAGW), 320-340 (LILH…FLLV), 368-388 (GVLI…LGFV), 404-424 (VVAI…TVVV), 448-468 (WMSM…NLGL), 472-492 (TAAM…AFMV), 503-523 (IHAV…FPVV), 546-566 (LGVI…GLAL), and 571-591 (VFSI…VGWW).

This sequence belongs to the MptA/B family.

It is found in the membrane. Its pathway is cell wall biogenesis; cell wall polysaccharide biosynthesis. Functionally, involved in the initiation of core alpha-(1-&gt;6) mannan biosynthesis of lipomannan (LM-A) and multi-mannosylated polymer (LM-B), extending triacylatedphosphatidyl-myo-inositol dimannoside (Ac1PIM2) and mannosylated glycolipid, 1,2-di-O-C16/C18:1-(alpha-D-mannopyranosyl)-(1-&gt;4)-(alpha-D-glucopyranosyluronic acid)-(1-&gt;3)-glycerol (Man1GlcAGroAc2), respectively. Catalyzes the addition of alpha-(1-&gt;6)-mannose residue. The chain is Alpha-(1-&gt;6)-mannopyranosyltransferase B (mptB) from Corynebacterium glutamicum (strain ATCC 13032 / DSM 20300 / JCM 1318 / BCRC 11384 / CCUG 27702 / LMG 3730 / NBRC 12168 / NCIMB 10025 / NRRL B-2784 / 534).